The sequence spans 651 residues: Acetyl-coenzyme A synthetase (651 aa).

CoA contacts are provided by residues 189–192 (RGGK), Thr311, and Asn335. Residues 387 to 389 (GEP), 411 to 416 (DTWWQT), Asp500, and Arg515 contribute to the ATP site. Ser523 contributes to the CoA binding site. Position 526 (Arg526) interacts with ATP. 3 residues coordinate Mg(2+): Val537, His539, and Val542. Residue Arg584 participates in CoA binding. Lys609 is modified (N6-acetyllysine).

This sequence belongs to the ATP-dependent AMP-binding enzyme family. It depends on Mg(2+) as a cofactor. Post-translationally, acetylated. Deacetylation by the SIR2-homolog deacetylase activates the enzyme.

It carries out the reaction acetate + ATP + CoA = acetyl-CoA + AMP + diphosphate. Functionally, catalyzes the conversion of acetate into acetyl-CoA (AcCoA), an essential intermediate at the junction of anabolic and catabolic pathways. AcsA undergoes a two-step reaction. In the first half reaction, AcsA combines acetate with ATP to form acetyl-adenylate (AcAMP) intermediate. In the second half reaction, it can then transfer the acetyl group from AcAMP to the sulfhydryl group of CoA, forming the product AcCoA. The chain is Acetyl-coenzyme A synthetase from Rhizobium etli (strain CIAT 652).